We begin with the raw amino-acid sequence, 149 residues long: Large ribosomal subunit protein uL13 (149 aa).

The protein belongs to the universal ribosomal protein uL13 family. As to quaternary structure, part of the 50S ribosomal subunit.

This protein is one of the early assembly proteins of the 50S ribosomal subunit, although it is not seen to bind rRNA by itself. It is important during the early stages of 50S assembly. The chain is Large ribosomal subunit protein uL13 from Borrelia hermsii (strain HS1 / DAH).